The following is a 133-amino-acid chain: MRHRVSGRHFGRTANQRKALLRGLLASLIKYERIETTVAKAKAVKELADRLVTFGKKGDLHSRRIALSYLPDRELVKKLFNEIAPRFSDRNGGYVRVIKTGFRIKDSAPKAILEFVDYAKPEKESDKEEKKAN.

This sequence belongs to the bacterial ribosomal protein bL17 family. In terms of assembly, part of the 50S ribosomal subunit. Contacts protein L32.

The sequence is that of Large ribosomal subunit protein bL17 from Thermodesulfovibrio yellowstonii (strain ATCC 51303 / DSM 11347 / YP87).